An 876-amino-acid polypeptide reads, in one-letter code: Importin subunit beta-1 (876 aa).

Methionine 1 bears the N-acetylmethionine mark. HEAT repeat units lie at residues 3-29 (LITI…ERAA), 32-62 (NLPT…LQIK), 85-120 (ANAR…ACAE), 129-160 (LIPQ…ICQD), and 170-201 (SNEI…LLNS). Serine 12 is modified (phosphoserine). The Importin N-terminal domain maps to 21-101 (AQKFLERAAV…KNYVLQTLGT (81 aa)). Lysine 211 is subject to N6-acetyllysine. HEAT repeat units lie at residues 212-247 (ESER…IMSL), 260-302 (LFAI…EAAE), 314-359 (YAKG…STCC), 363-392 (IVPH…AFGS), 399-438 (PNQL…ICEL), 449-485 (LAPL…YEAA), 500-537 (SSSF…EIVK), 544-592 (YPAV…QNVL), 597-639 (HQDA…VEVL), 644-680 (LKYM…LCRA), 686-724 (LPFC…ALAI), 729-777 (KKYL…QGLK), 785-828 (PDVM…LCTA), and 834-875 (LKLV…LKNQ). Residues 286 to 462 (VCDEEMDLAI…LQCLIEGLSA (177 aa)) form an essential for high affinity interaction with RPL23A region. The tract at residues 329–342 (TLTKQDENDDDDDW) is IAB-binding. The tract at residues 334-419 (DENDDDDDWN…MPTLIELMKD (86 aa)) is ran-GTP binding. 2 positions are modified to N6-acetyllysine: lysine 835 and lysine 867.

This sequence belongs to the importin beta family. Importin beta-1 subfamily. In terms of assembly, forms a complex with an importin alpha subunit. Interacts with XPO1. Forms a heterodimer with IPO7. The KPNB1/IPO7 heterodimer interacts with H1 histone. Interacts with SNUPN. Interacts with H2A, H2B, H3 and H4 histones. Component of an import snRNP complex composed of KPNB1, SNUPN, SMN1 and ZNF259. Component of a nuclear export receptor complex composed of KPNB1, Ran, SNUPN and XPO1. Interacts with SRY. Interacts with PRKCI/atypical protein kinase C iota. Interacts with KPNA2. Interacts with KPNA7. Interacts with SNAI1 (via zinc fingers) and SNAI2 (via zinc fingers). Interacts with SLC35G1 and STIM1. Interacts with DCAF8. Interacts with RAN. Interacts with NUMA1 (via C-terminus); this interaction is inhibited by RanGTP. Interacts with ZBED1/hDREF; required for nuclear import of ZBED1/hDREF. Interacts with SRP19. Interacts with RPL23A (via BIB domain), RPS7 and RPL5. Mono-ADP-ribosylated by PARP16.

Its subcellular location is the cytoplasm. The protein localises to the nucleus envelope. In terms of biological role, functions in nuclear protein import, either in association with an adapter protein, like an importin-alpha subunit, which binds to nuclear localization signals (NLS) in cargo substrates, or by acting as autonomous nuclear transport receptor. Acting autonomously, serves itself as NLS receptor. Docking of the importin/substrate complex to the nuclear pore complex (NPC) is mediated by KPNB1 through binding to nucleoporin FxFG repeats and the complex is subsequently translocated through the pore by an energy requiring, Ran-dependent mechanism. At the nucleoplasmic side of the NPC, Ran binds to importin-beta and the three components separate and importin-alpha and -beta are re-exported from the nucleus to the cytoplasm where GTP hydrolysis releases Ran from importin. The directionality of nuclear import is thought to be conferred by an asymmetric distribution of the GTP- and GDP-bound forms of Ran between the cytoplasm and nucleus. Mediates autonomously the nuclear import of ribosomal proteins RPL23A, RPS7 and RPL5. In association with IPO7, mediates the nuclear import of H1 histone. In vitro, mediates nuclear import of H2A, H2B, H3 and H4 histones. Imports MRTFA, SNAI1 and PRKCI into the nucleus. This Mus musculus (Mouse) protein is Importin subunit beta-1 (Kpnb1).